A 628-amino-acid chain; its full sequence is Leucine-rich repeat and fibronectin type-III domain-containing protein 3 (628 aa).

The signal sequence occupies residues 1–16 (MAILPLLLCLLPLAPA). The Extracellular segment spans residues 17–539 (SSPPQSATPS…PHAPFLGGTM (523 aa)). One can recognise an LRRNT domain in the interval 19–59 (PPQSATPSPCPRRCRCQTQSLPLSVLCPGAGLLFVPPSLDR). LRR repeat units follow at residues 60–83 (RAAE…ANMT), 84–105 (GLLH…AFAD), 108–129 (ALRA…QLRG), 132–153 (NLRH…ALDD), 157–178 (TLED…ALGR), 181–202 (NVNT…AFSR), and 205–226 (KLAR…PLFS). N-linked (GlcNAc...) asparagine glycosylation is present at asparagine 81. In terms of domain architecture, LRRCT spans 249–295 (NPLHCNCELVWLRRLAREDDLEACASPPALGGRYFWAVGEEEFVCEP). The 88-residue stretch at 295–382 (PPVVTHRSPP…GEATAAVELT (88 aa)) folds into the Ig-like domain. Cysteine 317 and cysteine 366 are joined by a disulfide. N-linked (GlcNAc...) asparagine glycosylation is found at asparagine 339, asparagine 348, and asparagine 393. The interval 382-430 (TVGPPPPPQLANSTSCDPPRDGDPDALTPPSAASASAKVADTGPPTDRG) is disordered. The segment covering 406–422 (DALTPPSAASASAKVAD) has biased composition (low complexity). In terms of domain architecture, Fibronectin type-III spans 425-523 (PPTDRGVQVT…GCARFSTEPA (99 aa)). A glycan (N-linked (GlcNAc...) asparagine) is linked at asparagine 462. Residues 540-560 (IIALGGVIVASVLVFIFVLLM) form a helical membrane-spanning segment. Residues 561–628 (RYKVHGGQPP…WGPGHEPVGP (68 aa)) lie on the Cytoplasmic side of the membrane.

Belongs to the LRFN family. As to quaternary structure, can form heteromeric complexes with LRFN1, LRFN2, LRFN4 and LRFN5. Able to form homomeric complexes across cell junctions, between adjacent cells. Does not interact with DLG4. Post-translationally, N-glycosylated.

It is found in the cell membrane. Its subcellular location is the cell projection. The protein localises to the axon. The protein resides in the dendrite. It localises to the synapse. It is found in the presynaptic cell membrane. Its subcellular location is the postsynaptic cell membrane. Its function is as follows. Cell adhesion molecule that mediates homophilic cell-cell adhesion in a Ca(2+)-independent manner. Promotes neurite outgrowth in hippocampal neurons. This chain is Leucine-rich repeat and fibronectin type-III domain-containing protein 3 (LRFN3), found in Homo sapiens (Human).